A 286-amino-acid polypeptide reads, in one-letter code: Pyridoxal kinase PdxY (286 aa).

Substrate contacts are provided by residues S9 and 44–45 (TQ). ATP is bound by residues D111, A143, E148, K181, and 208–211 (RPLV). D223 serves as a coordination point for substrate.

Belongs to the pyridoxine kinase family. PdxY subfamily. As to quaternary structure, homodimer. Mg(2+) serves as cofactor.

It carries out the reaction pyridoxal + ATP = pyridoxal 5'-phosphate + ADP + H(+). It functions in the pathway cofactor metabolism; pyridoxal 5'-phosphate salvage; pyridoxal 5'-phosphate from pyridoxal: step 1/1. Its function is as follows. Pyridoxal kinase involved in the salvage pathway of pyridoxal 5'-phosphate (PLP). Catalyzes the phosphorylation of pyridoxal to PLP. This is Pyridoxal kinase PdxY from Yersinia pseudotuberculosis serotype I (strain IP32953).